A 348-amino-acid chain; its full sequence is Protein RecA (348 aa).

64–71 (GPESSGKT) provides a ligand contact to ATP. The span at 324–335 (EYEIDGSNKEPL) shows a compositional bias: basic and acidic residues. Residues 324–348 (EYEIDGSNKEPLAETEETLSLLDDE) form a disordered region. A compositionally biased stretch (acidic residues) spans 336–348 (AETEETLSLLDDE).

This sequence belongs to the RecA family.

It is found in the cytoplasm. In terms of biological role, can catalyze the hydrolysis of ATP in the presence of single-stranded DNA, the ATP-dependent uptake of single-stranded DNA by duplex DNA, and the ATP-dependent hybridization of homologous single-stranded DNAs. It interacts with LexA causing its activation and leading to its autocatalytic cleavage. The protein is Protein RecA of Listeria ivanovii.